A 308-amino-acid chain; its full sequence is Probable lipid phosphate phosphatase 4 (308 aa).

6 helical membrane-spanning segments follow: residues 26 to 46 (WLILVVLGLIDIVLNVIEPFH), 66 to 86 (IPMWAVPIICILVPICIFIVY), 93 to 113 (VYDLHHAILGIGFSCLVTGVT), 162 to 182 (SFPSGHTSWSFAGLTFLAWYL), 193 to 213 (GHVAKLCLVFLPILISILIGI), and 226 to 246 (VFAGAIIGIFVASFSYLHFFP). A disordered region spans residues 274–308 (MTRTGSRGMLGNDVEPGNSASSPHDRHRESTDSDF). Residues 296-308 (PHDRHRESTDSDF) show a composition bias toward basic and acidic residues.

It belongs to the PA-phosphatase related phosphoesterase family.

The protein resides in the membrane. The protein is Probable lipid phosphate phosphatase 4 (LPP4) of Arabidopsis thaliana (Mouse-ear cress).